The sequence spans 875 residues: Leucine--tRNA ligase (875 aa).

Positions P43 to H53 match the 'HIGH' region motif. The 'KMSKS' region signature appears at K633–S637. Residue K636 coordinates ATP.

It belongs to the class-I aminoacyl-tRNA synthetase family.

The protein localises to the cytoplasm. The enzyme catalyses tRNA(Leu) + L-leucine + ATP = L-leucyl-tRNA(Leu) + AMP + diphosphate. This chain is Leucine--tRNA ligase, found in Bartonella bacilliformis (strain ATCC 35685 / KC583 / Herrer 020/F12,63).